Consider the following 123-residue polypeptide: Integration host factor subunit alpha (123 aa).

The disordered stretch occupies residues 97–123 (NANGTASSMSSSANAAAGDKSESASGT). The segment covering 102–113 (ASSMSSSANAAA) has biased composition (low complexity).

This sequence belongs to the bacterial histone-like protein family. Heterodimer of an alpha and a beta chain.

Functionally, this protein is one of the two subunits of integration host factor, a specific DNA-binding protein that functions in genetic recombination as well as in transcriptional and translational control. This is Integration host factor subunit alpha from Rhodopseudomonas palustris (strain HaA2).